The following is a 172-amino-acid chain: UPF0102 protein AM1_3954 (172 aa).

The protein belongs to the UPF0102 family.

The polypeptide is UPF0102 protein AM1_3954 (Acaryochloris marina (strain MBIC 11017)).